A 326-amino-acid polypeptide reads, in one-letter code: MALTEQKRVRLEKLSDENGIISALAFDQRGALKRLMVKHQTEEPTVAQMEELKVLVADELTKYASSMLLDPEYGLPATKALDEKAGLLLAYEKTGYDTTSTKRLPDCLDVWSAKRIKEEGADAVKFLLYYDVDSSDELNQEKQAYIERIGSECVAEDIPFFLEILAYDEKIADAGSVEYAKVKPHKVIGAMKVFSDPRFNIDVLKVEVPVNIKYVEGFAEGEVVYTREEAAAFFKAQDEATNLPYIYLSAGVSAKLFQDTLVFAHESGANFNGVLCGRATWAGSVEAYIKDGEAAARECVRTTGFENIDELNKVLQRTATSWKERV.

This sequence belongs to the aldolase LacD family.

It catalyses the reaction D-tagatofuranose 1,6-bisphosphate = D-glyceraldehyde 3-phosphate + dihydroxyacetone phosphate. It functions in the pathway carbohydrate metabolism; D-tagatose 6-phosphate degradation; D-glyceraldehyde 3-phosphate and glycerone phosphate from D-tagatose 6-phosphate: step 2/2. This is Tagatose 1,6-diphosphate aldolase from Streptococcus pneumoniae serotype 4 (strain ATCC BAA-334 / TIGR4).